The chain runs to 375 residues: E3 ubiquitin-protein ligase IE2 (375 aa).

Residues 1–12 (MSRINNADTPTN) show a composition bias toward polar residues. Disordered regions lie at residues 1 to 61 (MSRI…VGDR) and 115 to 142 (LTTTPRSPDYSPVHSPSGQVIDSDDYNS). Residues 177–225 (CHICSCTFTDIKNYNSNFVTSSECNHAVCFKCYVSIVFNKEAYKCSICN) form an RING-type zinc finger. A coiled-coil region spans residues 272–348 (KTIIEELQLE…TFLQNQLDAQ (77 aa)).

It belongs to the alphabaculovirus IE2 protein family. In terms of assembly, homooligomer. In terms of processing, auto-ubiquitinated.

The protein resides in the host nucleus. The enzyme catalyses S-ubiquitinyl-[E2 ubiquitin-conjugating enzyme]-L-cysteine + [acceptor protein]-L-lysine = [E2 ubiquitin-conjugating enzyme]-L-cysteine + N(6)-ubiquitinyl-[acceptor protein]-L-lysine.. RING-finger E3 ubiquitin ligase that plays an important regulatory role during the initial stages of infection. Migrates to specific nuclear foci early in infection supposely to prepare the sites for viral replication by targeting and ubiquitinating host proteins. This chain is E3 ubiquitin-protein ligase IE2 (IE2), found in Hyphantria cunea nuclear polyhedrosis virus (HcNPV).